We begin with the raw amino-acid sequence, 451 residues long: Phosphoglucosamine mutase (451 aa).

Serine 101 functions as the Phosphoserine intermediate in the catalytic mechanism. Mg(2+) contacts are provided by serine 101, aspartate 240, aspartate 242, and aspartate 244. Serine 101 is modified (phosphoserine).

It belongs to the phosphohexose mutase family. Mg(2+) serves as cofactor. Activated by phosphorylation.

It catalyses the reaction alpha-D-glucosamine 1-phosphate = D-glucosamine 6-phosphate. Catalyzes the conversion of glucosamine-6-phosphate to glucosamine-1-phosphate. This Nitrosococcus oceani (strain ATCC 19707 / BCRC 17464 / JCM 30415 / NCIMB 11848 / C-107) protein is Phosphoglucosamine mutase.